We begin with the raw amino-acid sequence, 54 residues long: Ovomucoid (54 aa).

A Kazal-like domain is found at 4–54 (VDCSGYPTHACTLELKPLCGSDNQTYSNKCGFCNAVAQSNGTLTLSHFGKC). 3 disulfides stabilise this stretch: Cys-6-Cys-36, Cys-14-Cys-33, and Cys-22-Cys-54. N-linked (GlcNAc...) asparagine glycosylation occurs at Asn-43.

It is found in the secreted. This chain is Ovomucoid, found in Leipoa ocellata (Malleefowl).